Consider the following 191-residue polypeptide: Fe/S biogenesis protein NfuA (191 aa).

Residues Cys-149 and Cys-152 each contribute to the [4Fe-4S] cluster site.

The protein belongs to the NfuA family. As to quaternary structure, homodimer. It depends on [4Fe-4S] cluster as a cofactor.

Involved in iron-sulfur cluster biogenesis. Binds a 4Fe-4S cluster, can transfer this cluster to apoproteins, and thereby intervenes in the maturation of Fe/S proteins. Could also act as a scaffold/chaperone for damaged Fe/S proteins. The polypeptide is Fe/S biogenesis protein NfuA (Yersinia pseudotuberculosis serotype O:1b (strain IP 31758)).